Consider the following 374-residue polypeptide: Carboxypeptidase O (374 aa).

The N-terminal stretch at 1–20 (MKPLLETLYLLGMLVPGGLG) is a signal peptide. The Peptidase M14 domain occupies 49-344 (IYHPMGEIYE…EAVLSVLDDV (296 aa)). Residues His-108 and Glu-111 each contribute to the Zn(2+) site. N-linked (GlcNAc...) asparagine glycosylation is found at Asn-132, Asn-174, and Asn-187. His-236 contributes to the Zn(2+) binding site. Asn-251 is a glycosylation site (N-linked (GlcNAc...) asparagine). Glu-310 serves as the catalytic Proton donor/acceptor. The GPI-anchor amidated aspartate moiety is linked to residue Asp-352. Residues 353 to 374 (SAGRVTSATMLLGLLVSCMSLL) constitute a propeptide, removed in mature form.

The protein belongs to the peptidase M14 family. It depends on Zn(2+) as a cofactor. In terms of processing, N-glycosylated. Detected in enterocytes of the ileum.

The protein localises to the apical cell membrane. Strongly inhibited by potato carboxypeptidase inhibitor, and the chelating agents EDTA and 1,10-phenanthroline. Also inhibited by compounds with multiple carboxylic acid groups such as citrate and succinate, and to a lesser exent the amino acids aspartate and glutamate. Not significantly inhibited by benzylsuccinic acid. In terms of biological role, carboxypeptidase which preferentially cleaves C-terminal acidic residues from peptides and proteins. Can also cleave C-terminal hydrophobic amino acids, with a preference for small residues over large residues. This is Carboxypeptidase O from Homo sapiens (Human).